Reading from the N-terminus, the 395-residue chain is ATP-dependent RNA helicase eIF4A (395 aa).

Serine 2 is modified (N-acetylserine). Positions 22 to 50 (YKFDDMELDENLLRGVFGYGFEEPSAIQQ) match the Q motif motif. The Helicase ATP-binding domain occupies 53–222 (IMPIIEGHDV…TKFMRNPVRI (170 aa)). Position 66-73 (66-73 (AQSGTGKT)) interacts with ATP. Residue threonine 73 is modified to Phosphothreonine. Phosphoserine occurs at positions 77 and 129. Threonine 146 is modified (phosphothreonine). The DEAD box motif lies at 170 to 173 (DEAD). In terms of domain architecture, Helicase C-terminal spans 233–394 (GIKQFYVNVE…ELPSDIATLL (162 aa)).

This sequence belongs to the DEAD box helicase family. eIF4A subfamily. In terms of assembly, component of the eIF4F complex, which composition varies with external and internal environmental conditions. It is composed of at least eIF4A, eIF4E and eIF4G.

Its subcellular location is the cytoplasm. It catalyses the reaction ATP + H2O = ADP + phosphate + H(+). Functionally, ATP-dependent RNA helicase which is a subunit of the eIF4F complex involved in cap recognition and is required for mRNA binding to ribosome. In the current model of translation initiation, eIF4A unwinds RNA secondary structures in the 5'-UTR of mRNAs which is necessary to allow efficient binding of the small ribosomal subunit, and subsequent scanning for the initiator codon. This is ATP-dependent RNA helicase eIF4A (TIF1) from Saccharomyces cerevisiae (strain YJM789) (Baker's yeast).